A 262-amino-acid polypeptide reads, in one-letter code: 3-methyl-2-oxobutanoate hydroxymethyltransferase (262 aa).

Mg(2+) contacts are provided by Asp-43 and Asp-82. Residues 43 to 44 (DS), Asp-82, and Lys-111 contribute to the 3-methyl-2-oxobutanoate site. Glu-113 is a Mg(2+) binding site. The Proton acceptor role is filled by Glu-180.

The protein belongs to the PanB family. Homodecamer; pentamer of dimers. The cofactor is Mg(2+).

The protein resides in the cytoplasm. It carries out the reaction 3-methyl-2-oxobutanoate + (6R)-5,10-methylene-5,6,7,8-tetrahydrofolate + H2O = 2-dehydropantoate + (6S)-5,6,7,8-tetrahydrofolate. It functions in the pathway cofactor biosynthesis; coenzyme A biosynthesis. In terms of biological role, catalyzes the reversible reaction in which hydroxymethyl group from 5,10-methylenetetrahydrofolate is transferred onto alpha-ketoisovalerate to form ketopantoate. The protein is 3-methyl-2-oxobutanoate hydroxymethyltransferase of Pyrobaculum aerophilum (strain ATCC 51768 / DSM 7523 / JCM 9630 / CIP 104966 / NBRC 100827 / IM2).